The sequence spans 510 residues: Archaeal glutamate synthase [NADPH] (510 aa).

4Fe-4S ferredoxin-type domains are found at residues 10–37 and 38–68; these read YKVE…YRRE and GDRI…IKEN. The [4Fe-4S] cluster site is built by Cys19, Cys22, Cys25, Cys29, Cys48, Cys51, Cys54, and Cys58.

This sequence belongs to the glutamate synthase family. FMN is required as a cofactor.

It carries out the reaction 2 L-glutamate + NADP(+) = L-glutamine + 2-oxoglutarate + NADPH + H(+). The protein is Archaeal glutamate synthase [NADPH] of Methanocaldococcus jannaschii (strain ATCC 43067 / DSM 2661 / JAL-1 / JCM 10045 / NBRC 100440) (Methanococcus jannaschii).